The chain runs to 330 residues: MKKTVLSGVQATGSLHLGNYLGSIRNWVKMQEEYNCFFFLADLHAITVDIKPSELNNSIMGVLAVYLAAGLNPDKVTIFAQSMVKEHAELAWLLNCVTPLGWLKRMTQFKDKAGSDQEKACLGLFSYPVLMAADILIYKADIVPVGEDQKQHLELTRDIAGVINRRFDKEILKVPEVLISETGTRIMSLRDGLKKMSKSDISDFSRINLKDDNDLIHQKIKKAKTDHLSFVSYDKETRPEISNLLDIYRSLSEESLEKIINNYQNQGFSKFKEDLAEIIITNLQPIRDKYLELMNDKEYLLKILHKGAEKARIRASETVNEVKEQFGFVI.

Residues 10 to 12 and 18 to 19 contribute to the ATP site; these read QAT and GN. A 'HIGH' region motif is present at residues 11–19; that stretch reads ATGSLHLGN. D134 serves as a coordination point for L-tryptophan. ATP is bound by residues 146 to 148, I186, and 195 to 199; these read GED and KMSKS. Positions 195–199 match the 'KMSKS' region motif; that stretch reads KMSKS.

This sequence belongs to the class-I aminoacyl-tRNA synthetase family. In terms of assembly, homodimer.

The protein localises to the cytoplasm. It catalyses the reaction tRNA(Trp) + L-tryptophan + ATP = L-tryptophyl-tRNA(Trp) + AMP + diphosphate + H(+). Its function is as follows. Catalyzes the attachment of tryptophan to tRNA(Trp). This chain is Tryptophan--tRNA ligase, found in Rickettsia felis (strain ATCC VR-1525 / URRWXCal2) (Rickettsia azadi).